A 422-amino-acid chain; its full sequence is BTB/POZ domain-containing protein KCTD18 (422 aa).

The BTB domain occupies 12 to 80 (DILRLNVGGC…YLHGEVHIPT (69 aa)). Disordered regions lie at residues 289-357 (VKNS…THLP) and 376-422 (LRRT…DQTK). The segment covering 396 to 406 (PAGPPEPPPDA) has biased composition (pro residues). The span at 413-422 (WTENGQDQTK) shows a compositional bias: polar residues.

This Bos taurus (Bovine) protein is BTB/POZ domain-containing protein KCTD18 (KCTD18).